Consider the following 171-residue polypeptide: MPMKGRFPIRRTLQYLGSGDVVFKESVKVMTVNYNTHGELGEGARKFVFFNIPQIQYKNPWVQIMLFKNMTPSPFLRFYLESGEQVLVDVETKSNTEIVEHIKKILGKKEETLREEELEKQQRFHPGNFGPRKYCLRECMCEVEGQVPCPGLVPLPKEMTGKYKAALKANT.

Belongs to the mitochondrion-specific ribosomal protein mS25 family. As to quaternary structure, component of the mitochondrial ribosome small subunit (28S) which comprises a 12S rRNA and about 30 distinct proteins.

The protein resides in the mitochondrion. In Rattus norvegicus (Rat), this protein is Small ribosomal subunit protein mS25 (Mrps25).